Here is a 606-residue protein sequence, read N- to C-terminus: 4-hydroxy-3-methylbut-2-en-1-yl diphosphate synthase (flavodoxin) (606 aa).

Residues C513, C516, C547, and E554 each coordinate [4Fe-4S] cluster.

Belongs to the IspG family. [4Fe-4S] cluster serves as cofactor.

It carries out the reaction (2E)-4-hydroxy-3-methylbut-2-enyl diphosphate + oxidized [flavodoxin] + H2O + 2 H(+) = 2-C-methyl-D-erythritol 2,4-cyclic diphosphate + reduced [flavodoxin]. The protein operates within isoprenoid biosynthesis; isopentenyl diphosphate biosynthesis via DXP pathway; isopentenyl diphosphate from 1-deoxy-D-xylulose 5-phosphate: step 5/6. Its function is as follows. Converts 2C-methyl-D-erythritol 2,4-cyclodiphosphate (ME-2,4cPP) into 1-hydroxy-2-methyl-2-(E)-butenyl 4-diphosphate. The protein is 4-hydroxy-3-methylbut-2-en-1-yl diphosphate synthase (flavodoxin) of Chlamydia felis (strain Fe/C-56) (Chlamydophila felis).